The sequence spans 475 residues: Deoxyguanosinetriphosphate triphosphohydrolase-like protein (475 aa).

Residues Arg118 to Ser272 form the HD domain.

This sequence belongs to the dGTPase family. Type 2 subfamily.

The polypeptide is Deoxyguanosinetriphosphate triphosphohydrolase-like protein (dgt) (Bifidobacterium longum (strain NCC 2705)).